Here is an 818-residue protein sequence, read N- to C-terminus: Elongation factor G, mitochondrial (818 aa).

The transit peptide at 1–23 (MFLGRAASRTCRHSQPLRVAARA) directs the protein to the mitochondrion. The tract at residues 67-96 (MASTATATKPTEEASSSDQPPAPAHKLTDN) is disordered. A compositionally biased stretch (polar residues) spans 69–85 (STATATKPTEEASSSDQ). Positions 102–390 (TFQRNIGISA…GVCEYLPNPS (289 aa)) constitute a tr-type G domain. GTP-binding positions include 111-118 (AHIDSGKT), 188-192 (DTPGH), and 242-245 (NKMD).

Belongs to the TRAFAC class translation factor GTPase superfamily. Classic translation factor GTPase family. EF-G/EF-2 subfamily.

It localises to the mitochondrion. It functions in the pathway protein biosynthesis; polypeptide chain elongation. Functionally, mitochondrial GTPase that catalyzes the GTP-dependent ribosomal translocation step during translation elongation. During this step, the ribosome changes from the pre-translocational (PRE) to the post-translocational (POST) state as the newly formed A-site-bound peptidyl-tRNA and P-site-bound deacylated tRNA move to the P and E sites, respectively. Catalyzes the coordinated movement of the two tRNA molecules, the mRNA and conformational changes in the ribosome. The polypeptide is Elongation factor G, mitochondrial (Coprinopsis cinerea (strain Okayama-7 / 130 / ATCC MYA-4618 / FGSC 9003) (Inky cap fungus)).